The sequence spans 487 residues: GTPase Der (487 aa).

Positions 1-20 (MAKAVRKSNSEETVPIKAPR) are disordered. 2 EngA-type G domains span residues 28 to 197 (PVVS…SSKP) and 225 to 401 (FRLA…SRSR). GTP-binding positions include 34-41 (GRQNVGKS), 83-87 (DTPGL), 149-152 (NKAD), 231-238 (GKPNSGKS), 278-282 (DTAGI), and 343-346 (NKWD). Positions 402–486 (RKVSTSELNK…PVRLEFRSDR (85 aa)) constitute a KH-like domain.

It belongs to the TRAFAC class TrmE-Era-EngA-EngB-Septin-like GTPase superfamily. EngA (Der) GTPase family. As to quaternary structure, associates with the 50S ribosomal subunit.

GTPase that plays an essential role in the late steps of ribosome biogenesis. This chain is GTPase Der, found in Leptospira borgpetersenii serovar Hardjo-bovis (strain L550).